The sequence spans 444 residues: 3-phosphoshikimate 1-carboxyvinyltransferase (444 aa).

Residues Lys-24, Ser-25, and Arg-29 each contribute to the 3-phosphoshikimate site. Phosphoenolpyruvate is bound at residue Lys-24. Residues Gly-97 and Arg-125 each coordinate phosphoenolpyruvate. 3-phosphoshikimate-binding residues include Ser-170, Gln-172, Asp-318, and Lys-345. Residue Gln-172 coordinates phosphoenolpyruvate. Asp-318 serves as the catalytic Proton acceptor. The phosphoenolpyruvate site is built by Arg-349 and Arg-391.

It belongs to the EPSP synthase family. Monomer.

It is found in the cytoplasm. It catalyses the reaction 3-phosphoshikimate + phosphoenolpyruvate = 5-O-(1-carboxyvinyl)-3-phosphoshikimate + phosphate. It participates in metabolic intermediate biosynthesis; chorismate biosynthesis; chorismate from D-erythrose 4-phosphate and phosphoenolpyruvate: step 6/7. Its function is as follows. Catalyzes the transfer of the enolpyruvyl moiety of phosphoenolpyruvate (PEP) to the 5-hydroxyl of shikimate-3-phosphate (S3P) to produce enolpyruvyl shikimate-3-phosphate and inorganic phosphate. This Halorhodospira halophila (strain DSM 244 / SL1) (Ectothiorhodospira halophila (strain DSM 244 / SL1)) protein is 3-phosphoshikimate 1-carboxyvinyltransferase.